The sequence spans 306 residues: Dermonecrotic toxin LiSicTox-alphaIA2ai (306 aa).

An N-terminal signal peptide occupies residues 1-18 (MLPYIALILVCWSVLSQA). The propeptide occupies 19 to 26 (AQTDVEGR). The active site involves His-38. Mg(2+) is bound by residues Glu-58 and Asp-60. His-74 acts as the Nucleophile in catalysis. Intrachain disulfides connect Cys-78–Cys-84 and Cys-80–Cys-223. Mg(2+) is bound at residue Asp-118. An N-linked (GlcNAc...) asparagine glycan is attached at Asn-283.

The protein belongs to the arthropod phospholipase D family. Class II subfamily. Class IIa sub-subfamily. Requires Mg(2+) as cofactor. As to expression, expressed by the venom gland.

It localises to the secreted. It carries out the reaction an N-(acyl)-sphingosylphosphocholine = an N-(acyl)-sphingosyl-1,3-cyclic phosphate + choline. It catalyses the reaction an N-(acyl)-sphingosylphosphoethanolamine = an N-(acyl)-sphingosyl-1,3-cyclic phosphate + ethanolamine. The catalysed reaction is a 1-acyl-sn-glycero-3-phosphocholine = a 1-acyl-sn-glycero-2,3-cyclic phosphate + choline. The enzyme catalyses a 1-acyl-sn-glycero-3-phosphoethanolamine = a 1-acyl-sn-glycero-2,3-cyclic phosphate + ethanolamine. Functionally, dermonecrotic toxins cleave the phosphodiester linkage between the phosphate and headgroup of certain phospholipids (sphingolipid and lysolipid substrates), forming an alcohol (often choline) and a cyclic phosphate. This toxin acts on sphingomyelin (SM). It may also act on ceramide phosphoethanolamine (CPE), lysophosphatidylcholine (LPC) and lysophosphatidylethanolamine (LPE), but not on lysophosphatidylserine (LPS), and lysophosphatidylglycerol (LPG). It acts by transphosphatidylation, releasing exclusively cyclic phosphate products as second products. It induces complement-dependent hemolysis, dermonecrosis, vascular permeability and platelet aggregation. The protein is Dermonecrotic toxin LiSicTox-alphaIA2ai of Loxosceles intermedia (Brown spider).